The primary structure comprises 224 residues: MIDVLFLPEPVSQQHVCVVVDVLRATSTIVTALANGARCVVPVRKIAEAKKRKAENILICGERKGIKPKGFDLGNSPIEYFTVKDKEVILTTTNGTRAISMINSQKLYAACFLNLHAVIEQLRNHDHVTIVCSGQKGKIAYEDVLCAGAIVYELNDKLTDGARISRELWKQSRRKDLSKLLFESQHAQELAEYGFSSDITFCSQTDLYSIVPVFVEDRFIKQAP.

It belongs to the ComB family. It depends on Mg(2+) as a cofactor.

It carries out the reaction (2R)-O-phospho-3-sulfolactate + H2O = (2R)-3-sulfolactate + phosphate. In Pseudothermotoga lettingae (strain ATCC BAA-301 / DSM 14385 / NBRC 107922 / TMO) (Thermotoga lettingae), this protein is Probable 2-phosphosulfolactate phosphatase.